The sequence spans 877 residues: EF-hand domain-containing family member B (877 aa).

Disordered regions lie at residues 1 to 47 (MCSF…GRKS) and 268 to 290 (AQQP…PDRI). EF-hand domains lie at 605 to 640 (QNFD…ACLH) and 641 to 676 (LDEK…KDKT). 7 residues coordinate Ca(2+): Asp618, Asp622, Glu629, Asp654, Asp656, Asp658, and Glu665.

Microtubule inner protein component of sperm flagellar doublet microtubules. Interacts with STIM1 and ORAI1; the interactions take place upon Ca(2+)-store depletion and dissociate through a Ca(2+)-dependent mechanism. Interaction with STIM1 inhibits STIM1 interaction with SARAF. In terms of tissue distribution, expressed in trachea multiciliated cells.

The protein resides in the cytoplasm. It localises to the cytoskeleton. It is found in the cilium axoneme. The protein localises to the flagellum axoneme. Microtubule inner protein (MIP) part of the dynein-decorated doublet microtubules (DMTs) in cilia axoneme, which is required for motile cilia beating. Cytosolic sensor for calcium, modulates the interaction of STIM1 and ORAI1 upon store depletion and the activation of store-operated Ca(2+) entry (SOCE) and NFAT translocation from cytosol to nucleus. In Bos taurus (Bovine), this protein is EF-hand domain-containing family member B.